The chain runs to 95 residues: Co-chaperonin GroES (95 aa).

The protein belongs to the GroES chaperonin family. As to quaternary structure, heptamer of 7 subunits arranged in a ring. Interacts with the chaperonin GroEL.

Its subcellular location is the cytoplasm. Its function is as follows. Together with the chaperonin GroEL, plays an essential role in assisting protein folding. The GroEL-GroES system forms a nano-cage that allows encapsulation of the non-native substrate proteins and provides a physical environment optimized to promote and accelerate protein folding. GroES binds to the apical surface of the GroEL ring, thereby capping the opening of the GroEL channel. This chain is Co-chaperonin GroES, found in Rickettsia akari (strain Hartford).